Here is an 860-residue protein sequence, read N- to C-terminus: Alanine--tRNA ligase (860 aa).

H563, H567, C665, and H669 together coordinate Zn(2+).

The protein belongs to the class-II aminoacyl-tRNA synthetase family. Zn(2+) is required as a cofactor.

Its subcellular location is the cytoplasm. The catalysed reaction is tRNA(Ala) + L-alanine + ATP = L-alanyl-tRNA(Ala) + AMP + diphosphate. In terms of biological role, catalyzes the attachment of alanine to tRNA(Ala) in a two-step reaction: alanine is first activated by ATP to form Ala-AMP and then transferred to the acceptor end of tRNA(Ala). Also edits incorrectly charged Ser-tRNA(Ala) and Gly-tRNA(Ala) via its editing domain. This chain is Alanine--tRNA ligase, found in Vibrio cholerae serotype O1 (strain ATCC 39315 / El Tor Inaba N16961).